The chain runs to 143 residues: UPF0102 protein Acid345_3985 (143 aa).

The protein belongs to the UPF0102 family.

The chain is UPF0102 protein Acid345_3985 from Koribacter versatilis (strain Ellin345).